A 155-amino-acid polypeptide reads, in one-letter code: Putative pre-16S rRNA nuclease (155 aa).

Belongs to the YqgF nuclease family.

It is found in the cytoplasm. In terms of biological role, could be a nuclease involved in processing of the 5'-end of pre-16S rRNA. This Xanthomonas euvesicatoria pv. vesicatoria (strain 85-10) (Xanthomonas campestris pv. vesicatoria) protein is Putative pre-16S rRNA nuclease.